The primary structure comprises 23 residues: MVTMVKKWLLLMTFMAGCRGMIY.

May play a role inhost modulation. Is not involved in viral protein synthesis or DNA replication. In Porcine circovirus 2 (PCV2), this protein is Protein NS0 (NS0).